The chain runs to 518 residues: Nicotine N-demethylase CYP82E3 (518 aa).

The chain crosses the membrane as a helical span at residues 2 to 22; sequence VFPVEAIVGLVTFTFLFYFLW. Residue K254 forms a Glycyl lysine isopeptide (Lys-Gly) (interchain with G-Cter in ubiquitin) linkage. A heme-binding site is contributed by C458.

This sequence belongs to the cytochrome P450 family. CYP82E2 subfamily. Requires heme as cofactor. Expressed in leaves.

The protein localises to the membrane. The catalysed reaction is (S)-nicotine + reduced [NADPH--hemoprotein reductase] + O2 = (S)-nornicotine + formaldehyde + oxidized [NADPH--hemoprotein reductase] + H2O + H(+). It participates in alkaloid biosynthesis; nicotine biosynthesis. Functionally, involved in the biosynthesis of pyridine alkaloid natural products, leading mainly to the production of anabasine, anatabine, nicotine and nornicotine, effective deterrents against herbivores with antiparasitic and pesticide properties (neurotoxins); nornicotine serves as the precursor in the synthesis of the carcinogen compound N'-nitrosonornicotine (NNN). Catalyzes the demethylation of nicotine to form nornicotine. The sequence is that of Nicotine N-demethylase CYP82E3 from Nicotiana tomentosiformis (Tobacco).